The chain runs to 144 residues: Austinoid biosynthesis cluster protein S (144 aa).

Belongs to the trt14 isomerase family. In terms of assembly, homodimer.

Its pathway is secondary metabolite biosynthesis; terpenoid biosynthesis. Functionally, part of the gene cluster that mediates the biosynthesis of calidodehydroaustin, a fungal meroterpenoid. The first step of the pathway is the synthesis of 3,5-dimethylorsellinic acid by the polyketide synthase ausA. 3,5-dimethylorsellinic acid is then prenylated by the polyprenyl transferase ausN. Further epoxidation by the FAD-dependent monooxygenase ausM and cyclization by the probable terpene cyclase ausL lead to the formation of protoaustinoid A. Protoaustinoid A is then oxidized to spiro-lactone preaustinoid A3 by the combined action of the FAD-binding monooxygenases ausB and ausC, and the dioxygenase ausE. Acid-catalyzed keto-rearrangement and ring contraction of the tetraketide portion of preaustinoid A3 by ausJ lead to the formation of preaustinoid A4. The aldo-keto reductase ausK, with the help of ausH, is involved in the next step by transforming preaustinoid A4 into isoaustinone which is in turn hydroxylated by the P450 monooxygenase ausI to form austinolide. The cytochrome P450 monooxygenase ausG modifies austinolide to austinol. Austinol is further acetylated to austin by the O-acetyltransferase ausP, which spontaneously changes to dehydroaustin. The cytochrome P450 monooxygenase ausR then converts dehydroaustin is into 7-dehydrodehydroaustin. The hydroxylation catalyzed by ausR permits the O-acetyltransferase ausQ to add an additional acetyl group to the molecule, leading to the formation of acetoxydehydroaustin. The short chain dehydrogenase ausT catalyzes the reduction of the double bond present between carbon atoms 1 and 2 to convert 7-dehydrodehydroaustin into 1,2-dihydro-7-hydroxydehydroaustin. AusQ catalyzes not only an acetylation reaction but also the addition of the PKS ausV diketide product to 1,2-dihydro-7-hydroxydehydroaustin, forming precalidodehydroaustin. Finally, the iron/alpha-ketoglutarate-dependent dioxygenase converts precalidodehydroaustin into calidodehydroaustin. AusS is necessary for austinoids production and may play a possible function as a regulator. Its function is as follows. May play a possible function as a regulator. This is Austinoid biosynthesis cluster protein S from Aspergillus calidoustus.